The chain runs to 578 residues: XK-related protein 6 (578 aa).

Transmembrane regions (helical) follow at residues 86–106 (WIVLALLVFFWDVGTDLWLAV), 114–134 (FLWSGLTLFFVLVPSVLVQIL), 253–273 (WLQCVSALSSLLSLAWVLASY), 307–327 (VLSLALFASVFHIYFGIFVVL), 348–368 (WEEVLFNMVVGVVYVFCWFNV), 377–397 (MVAYYVVVLLENVILTSLWYA), and 410–430 (LALCGVFLCFASGVACMVLYY).

Belongs to the XK family.

Its subcellular location is the cell membrane. This Tetraodon nigroviridis (Spotted green pufferfish) protein is XK-related protein 6 (xkr6).